The sequence spans 631 residues: Phosphomethylpyrimidine synthase (631 aa).

Residues Asn-239, Met-268, Tyr-297, His-333, 353–355 (SRG), 394–397 (DGLR), and Glu-433 each bind substrate. Position 437 (His-437) interacts with Zn(2+). Residue Tyr-460 coordinates substrate. His-501 contributes to the Zn(2+) binding site. Residues Cys-581, Cys-584, and Cys-589 each coordinate [4Fe-4S] cluster.

It belongs to the ThiC family. In terms of assembly, homodimer. [4Fe-4S] cluster is required as a cofactor.

The catalysed reaction is 5-amino-1-(5-phospho-beta-D-ribosyl)imidazole + S-adenosyl-L-methionine = 4-amino-2-methyl-5-(phosphooxymethyl)pyrimidine + CO + 5'-deoxyadenosine + formate + L-methionine + 3 H(+). The protein operates within cofactor biosynthesis; thiamine diphosphate biosynthesis. In terms of biological role, catalyzes the synthesis of the hydroxymethylpyrimidine phosphate (HMP-P) moiety of thiamine from aminoimidazole ribotide (AIR) in a radical S-adenosyl-L-methionine (SAM)-dependent reaction. This chain is Phosphomethylpyrimidine synthase, found in Escherichia coli O7:K1 (strain IAI39 / ExPEC).